A 550-amino-acid polypeptide reads, in one-letter code: MSAKDVKFGGDARDRMLRGVDILANAVKVTLGPKGRNVLIEKSFGAPRITKDGVTVAKEIELDDKFENMGAQMLREVASKTNDLAGDGTTTATVLAQAIVREGAKSVAAGMNPMDLRRGIEIAVQAVVKDIQKRARPVASSAEIAQVGTISANGDAPIGKMIAQAMQKVGNEGVITVEENKSLETEVDIVEGMKFDRGYLSPYFVTNAEKMTVELDDVYILLHEKKVSGLQSMLPVLEAVVQSGKPLLIIAEDVEGEALATLVVNRLRGGLKVSAVKAPGFGDRRKAMLEDIAILTGGQLISEEIGIKLESVTLKMLGRAKKVVIDKENTTIVGGAGKKPDIEARVQQIKAQIEETSSDYDREKLQERLAKLAGGVAVIRVGGATEVEVKEKKDRVEDALNATRAAVQEGIVPGGGVALLRAKKAVGRIHNDNADVQAGINIVLKALEAPIRQIAENAGVEGSIVVGKILENKSETFGFDAQTEDYVDMLAKGIVDPAKVVRTALQDASSVAALLVTTEAMVAELPKEAAPAMPGGGGMGGMGGMGGMGF.

ATP-binding positions include 30–33 (TLGP), Lys51, 87–91 (DGTTT), Gly415, and Asp496.

It belongs to the chaperonin (HSP60) family. In terms of assembly, forms a cylinder of 14 subunits composed of two heptameric rings stacked back-to-back. Interacts with the co-chaperonin GroES.

Its subcellular location is the cytoplasm. The catalysed reaction is ATP + H2O + a folded polypeptide = ADP + phosphate + an unfolded polypeptide.. Its function is as follows. Together with its co-chaperonin GroES, plays an essential role in assisting protein folding. The GroEL-GroES system forms a nano-cage that allows encapsulation of the non-native substrate proteins and provides a physical environment optimized to promote and accelerate protein folding. This is Chaperonin GroEL 1 from Rhodopseudomonas palustris (strain HaA2).